The primary structure comprises 271 residues: ATP synthase subunit a (271 aa).

A run of 5 helical transmembrane segments spans residues 40 to 60, 100 to 120, 146 to 166, 220 to 240, and 242 to 262; these read TINIDSMFFSVGLGLLFLVLF, LIAPLALTIFVWVFLMNLMDL, DVNVTLSMALGVFILILFYSI, LIFILIAGLLPWWSQWILNVP, and AIFHILIITLQAFIFMVLTIV.

The protein belongs to the ATPase A chain family. In terms of assembly, F-type ATPases have 2 components, CF(1) - the catalytic core - and CF(0) - the membrane proton channel. CF(1) has five subunits: alpha(3), beta(3), gamma(1), delta(1), epsilon(1). CF(0) has three main subunits: a(1), b(2) and c(9-12). The alpha and beta chains form an alternating ring which encloses part of the gamma chain. CF(1) is attached to CF(0) by a central stalk formed by the gamma and epsilon chains, while a peripheral stalk is formed by the delta and b chains.

The protein resides in the cell inner membrane. Functionally, key component of the proton channel; it plays a direct role in the translocation of protons across the membrane. The chain is ATP synthase subunit a from Shigella dysenteriae serotype 1 (strain Sd197).